The sequence spans 490 residues: Protein U94 (490 aa).

A PV NS1-Nuc domain is found at 1–210; that stretch reads MFSIINPSDD…SHFNKKPNVK (210 aa).

Its subcellular location is the host nucleus. This is Protein U94 (U94) from Human herpesvirus 6A (strain Uganda-1102) (HHV-6 variant A).